A 426-amino-acid polypeptide reads, in one-letter code: 3-phosphoshikimate 1-carboxyvinyltransferase (426 aa).

3-phosphoshikimate contacts are provided by K22, S23, and R27. Position 22 (K22) interacts with phosphoenolpyruvate. Phosphoenolpyruvate is bound by residues G96 and R124. Positions 170, 171, 172, 198, 314, 337, and 341 each coordinate 3-phosphoshikimate. Q172 contacts phosphoenolpyruvate. The Proton acceptor role is filled by D314. 3 residues coordinate phosphoenolpyruvate: R345, R387, and K412.

Belongs to the EPSP synthase family. Monomer.

The protein resides in the cytoplasm. It catalyses the reaction 3-phosphoshikimate + phosphoenolpyruvate = 5-O-(1-carboxyvinyl)-3-phosphoshikimate + phosphate. Its pathway is metabolic intermediate biosynthesis; chorismate biosynthesis; chorismate from D-erythrose 4-phosphate and phosphoenolpyruvate: step 6/7. Its function is as follows. Catalyzes the transfer of the enolpyruvyl moiety of phosphoenolpyruvate (PEP) to the 5-hydroxyl of shikimate-3-phosphate (S3P) to produce enolpyruvyl shikimate-3-phosphate and inorganic phosphate. This Shewanella sediminis (strain HAW-EB3) protein is 3-phosphoshikimate 1-carboxyvinyltransferase.